The following is a 114-amino-acid chain: MSAPAAGPPAAAPGDGAPQGPPNLTSNRRLQQTQAQVDEVVDIMRVNVDKVLERDTKLSELDDRADALQAGASQFETSAAKLKRKYWWKNMKMMIIMGVICAIILIIIIVYFST.

The span at 1 to 11 (MSAPAAGPPAA) shows a compositional bias: pro residues. A disordered region spans residues 1 to 31 (MSAPAAGPPAAAPGDGAPQGPPNLTSNRRLQ). Ser2 is modified (N-acetylserine). The Cytoplasmic segment spans residues 2–92 (SAPAAGPPAA…KRKYWWKNMK (91 aa)). The v-SNARE coiled-coil homology domain maps to 29–89 (RLQQTQAQVD…AKLKRKYWWK (61 aa)). A helical; Anchor for type IV membrane protein membrane pass occupies residues 93-111 (MMIIMGVICAIILIIIIVY). Over 112–114 (FST) the chain is Vesicular.

It belongs to the synaptobrevin family.

The protein resides in the cytoplasmic vesicle. Its subcellular location is the secretory vesicle. It is found in the synaptic vesicle membrane. It localises to the cell membrane. Involved in the targeting and/or fusion of transport vesicles to their target membrane. Major SNARE protein of synaptic vesicles which mediates fusion of synaptic vesicles to release neurotransmitters. Essential for fast vesicular exocytosis and activity-dependent neurotransmitter release as well as fast endocytosis that mediates rapid reuse of synaptic vesicles. The chain is Vesicle-associated membrane protein 2 (vamp2) from Xenopus laevis (African clawed frog).